The following is an 83-amino-acid chain: Large ribosomal subunit protein bL31B (83 aa).

It belongs to the bacterial ribosomal protein bL31 family. Type B subfamily. In terms of assembly, part of the 50S ribosomal subunit.

In terms of biological role, binds the 23S rRNA. This Hydrogenovibrio crunogenus (strain DSM 25203 / XCL-2) (Thiomicrospira crunogena) protein is Large ribosomal subunit protein bL31B.